Here is a 152-residue protein sequence, read N- to C-terminus: Small ribosomal subunit protein uS19 (152 aa).

Belongs to the universal ribosomal protein uS19 family.

This chain is Small ribosomal subunit protein uS19 (RPS15), found in Podospora anserina (Pleurage anserina).